The sequence spans 430 residues: uncharacterized protein (430 aa).

This is an uncharacterized protein from Bos taurus (Bovine).